The following is a 156-amino-acid chain: MENRERAGAGAVGSAGSLGLRVGQAVFSSASLLFMSVGVEFFSYTAFCFLVTIMGLVIPWSCTLAMIDVYSILVGCPLRVPGVMVIVVIGDWVLAILSLAAASSSAAVIDLLLQFHGSHCSPRFCGRYQLSAMMAFLSWFLTAASSLFNLWFIASR.

Residues M1 to R21 are Cytoplasmic-facing. The chain crosses the membrane as a helical span at residues V22 to F42. At S43 to A46 the chain is on the extracellular side. Residues F47 to I67 traverse the membrane as a helical segment. At D68–P81 the chain is on the cytoplasmic side. Residues G82–A102 traverse the membrane as a helical segment. Residues S103–A132 are Extracellular-facing. A helical membrane pass occupies residues M133–I153. At A154–R156 the chain is on the cytoplasmic side.

It belongs to the Casparian strip membrane proteins (CASP) family. Homodimer and heterodimers.

Its subcellular location is the cell membrane. This Oryza sativa subsp. japonica (Rice) protein is CASP-like protein 5C1.